The chain runs to 555 residues: Neutral amino acid transporter B(0) (555 aa).

M1 is modified (N-acetylmethionine). Residues 1-52 (MAVDPPKADPKGVVAVDPTANCGSGLKSREDQGAKAGGCCSSRDQVCRCLRA) lie on the Cytoplasmic side of the membrane. The helical transmembrane segment at 53–82 (NLLVLLTVAAAVAGVVLGLGVSAAGGAEAL) threads the bilayer. Over 83 to 95 (GHARFTAFAFPGE) the chain is Extracellular. The chain crosses the membrane as a helical span at residues 96-117 (LLLRLLEMIILPLVVCSLIGGA). The Cytoplasmic portion of the chain corresponds to 118–131 (ASLDPSALGRLGAW). The chain crosses the membrane as a helical span at residues 132–154 (ALLFFLVTTLLSSALGVALALAL). The Extracellular segment spans residues 155–239 (KPGAAFAAIN…SNATMDQPHC (85 aa)). N-linked (GlcNAc...) asparagine glycosylation is found at N164 and N231. A helical membrane pass occupies residues 240 to 262 (EMKMNILGLVVFAIVFGVALRKL). At 263–271 (GPEGELLIR) the chain is on the cytoplasmic side. The chain crosses the membrane as a helical span at residues 272–299 (FFNSFNDATMVLVSWIMWYAPIGILFLV). Over 300–320 (AGKIVEMKDIRQLFIGLGKYI) the chain is Extracellular. The helical transmembrane segment at 321–342 (VCCLLGHAIHGLLVLPLIYFLF) threads the bilayer. The Cytoplasmic portion of the chain corresponds to 343-347 (TRKNP). Residues 348–378 (YRFLWGIVTPLATAFGTSSSSATLPLMMKCV) constitute an intramembrane region (discontinuously helical). Over 379 to 387 (EEKNGVAKH) the chain is Cytoplasmic. Residues 388 to 414 (ISRFILPIGATVNMDGAALFQCVAAVF) form a helical membrane-spanning segment. Na(+)-binding residues include G396, T398, and N400. The Extracellular segment spans residues 415–427 (IAQLNGMSLDFVK). The discontinuously helical intramembrane region spans 428–461 (IITILVTATASSVGAAGIPAGGVLTLAIILEAIS). Topologically, residues 462–474 (LPVKDISLILAVD) are extracellular. The chain crosses the membrane as a helical span at residues 475–496 (WLVDRSCTVLNVEGDAFGAGLL). 2 residues coordinate Na(+): N485 and D489. The Cytoplasmic segment spans residues 497 to 555 (QSYVDRTKMPSSEPELIQVKNDVSLKPLPLATEEGNPLLKQCREPSGDSSATCEKESVM). Phosphoserine is present on residues S507, S508, S520, S545, and S553. The disordered stretch occupies residues 534-555 (LLKQCREPSGDSSATCEKESVM).

It belongs to the dicarboxylate/amino acid:cation symporter (DAACS) (TC 2.A.23) family. Homotrimer.

The protein localises to the cell membrane. It is found in the melanosome. It catalyses the reaction L-glutamine(out) + L-serine(in) + Na(+)(out) = L-glutamine(in) + L-serine(out) + Na(+)(in). The enzyme catalyses L-glutamine(in) + L-serine(out) + Na(+)(out) = L-glutamine(out) + L-serine(in) + Na(+)(in). It carries out the reaction L-threonine(in) + L-glutamine(out) + Na(+)(out) = L-threonine(out) + L-glutamine(in) + Na(+)(in). The catalysed reaction is L-threonine(out) + L-glutamine(in) + Na(+)(out) = L-threonine(in) + L-glutamine(out) + Na(+)(in). It catalyses the reaction L-asparagine(in) + L-glutamine(out) + Na(+)(out) = L-asparagine(out) + L-glutamine(in) + Na(+)(in). The enzyme catalyses L-asparagine(out) + L-glutamine(in) + Na(+)(out) = L-asparagine(in) + L-glutamine(out) + Na(+)(in). It carries out the reaction L-glutamine(in) + L-alanine(out) + Na(+)(out) = L-glutamine(out) + L-alanine(in) + Na(+)(in). The catalysed reaction is L-valine(out) + L-glutamine(in) + Na(+)(out) = L-valine(in) + L-glutamine(out) + Na(+)(in). It catalyses the reaction L-glutamine(in) + L-methionine(out) + Na(+)(out) = L-glutamine(out) + L-methionine(in) + Na(+)(in). The enzyme catalyses L-glutamine(in) + L-glutamate(out) + Na(+)(out) + H(+)(out) = L-glutamine(out) + L-glutamate(in) + Na(+)(in) + H(+)(in). It carries out the reaction D-serine(in) + L-glutamine(out) + Na(+)(out) = D-serine(out) + L-glutamine(in) + Na(+)(in). The catalysed reaction is D-serine(in) + L-alanine(out) + Na(+)(out) = D-serine(out) + L-alanine(in) + Na(+)(in). It catalyses the reaction nitrate(in) = nitrate(out). The enzyme catalyses iodide(out) = iodide(in). It carries out the reaction thiocyanate(in) = thiocyanate(out). Down-regulated at acidic pH. In terms of biological role, sodium-coupled antiporter of neutral amino acids. In a tri-substrate transport cycle, exchanges neutral amino acids between the extracellular and intracellular compartments, coupled to the inward cotransport of at least one sodium ion. The preferred substrate is the essential amino acid L-glutamine, a precursor for biosynthesis of proteins, nucleotides and amine sugars as well as an alternative fuel for mitochondrial oxidative phosphorylation. Exchanges L-glutamine with other neutral amino acids such as L-serine, L-threonine and L-asparagine in a bidirectional way. Provides L-glutamine to proliferating stem and activated cells driving the metabolic switch toward cell differentiation. The transport cycle is usually pH-independent, with the exception of L-glutamate. Transports extracellular L-glutamate coupled to the cotransport of one proton and one sodium ion in exchange for intracellular L-glutamine counter-ion. May provide for L-glutamate uptake in glial cells regulating glutamine/glutamate cycle in the nervous system. Can transport D-amino acids. Mediates D-serine release from the retinal glia potentially affecting NMDA receptor function in retinal neurons. Displays sodium- and amino acid-dependent but uncoupled channel-like anion conductance with a preference SCN(-) &gt;&gt; NO3(-) &gt; I(-) &gt; Cl(-). Through binding of the fusogenic protein syncytin-1/ERVW-1 may mediate trophoblasts syncytialization, the spontaneous fusion of their plasma membranes, an essential process in placental development. The sequence is that of Neutral amino acid transporter B(0) (Slc1a5) from Rattus norvegicus (Rat).